Consider the following 118-residue polypeptide: uncharacterized protein (118 aa).

It is found in the mitochondrion. This is an uncharacterized protein from Arabidopsis thaliana (Mouse-ear cress).